The following is a 1128-amino-acid chain: Scavenger receptor cysteine-rich domain superfamily protein (1128 aa).

Positions 1 to 24 (MTSLRRGNICWVAVCAALLTLTRG) are cleaved as a signal peptide. The Extracellular segment spans residues 25–1051 (IDVIAKPSRT…VGAQAGPAGG (1027 aa)). 9 SRCR domains span residues 40 to 140 (VQLV…VVCN), 143 to 245 (VRLA…VICT), 248 to 348 (IRLV…VICT), 351 to 450 (VRLV…AKCQ), 453 to 553 (VQLV…VVCR), 555 to 654 (IRLA…VVCR), 657 to 757 (LRLA…VVCT), 759 to 866 (LRLT…VLCK), and 868 to 968 (IRLV…VQCK). Disulfide bonds link Cys-65-Cys-129, Cys-78-Cys-139, Cys-109-Cys-119, Cys-168-Cys-234, Cys-181-Cys-244, Cys-212-Cys-222, Cys-273-Cys-337, Cys-286-Cys-347, Cys-316-Cys-326, Cys-376-Cys-439, Cys-389-Cys-449, Cys-419-Cys-429, Cys-478-Cys-542, Cys-491-Cys-552, Cys-522-Cys-532, Cys-583-Cys-644, Cys-596-Cys-653, Cys-624-Cys-634, Cys-682-Cys-746, Cys-695-Cys-756, and Cys-726-Cys-736. Asn-87 is a glycosylation site (N-linked (GlcNAc...) asparagine). N-linked (GlcNAc...) asparagine glycans are attached at residues Asn-190 and Asn-194. A glycan (N-linked (GlcNAc...) asparagine) is linked at Asn-229. Asn-422 carries N-linked (GlcNAc...) asparagine glycosylation. Asn-601 and Asn-612 each carry an N-linked (GlcNAc...) asparagine glycan. 4 N-linked (GlcNAc...) asparagine glycosylation sites follow: Asn-765, Asn-808, Asn-834, and Asn-936. Cystine bridges form between Cys-803–Cys-865, Cys-833–Cys-843, Cys-906–Cys-967, Cys-937–Cys-947, Cys-971–Cys-1013, and Cys-999–Cys-1026. Residues 969–1028 (AGCDWPGPIRHGSFSPNRSSYDPLTTIDVKCDAGYELMGSKTLQCVTGCDWSRPTPECQR) form the Sushi domain. An N-linked (GlcNAc...) asparagine glycan is attached at Asn-985. Asn-1031 carries N-linked (GlcNAc...) asparagine glycosylation. A helical transmembrane segment spans residues 1052 to 1072 (VMLIIGIILGAVVMMLIACVA). Topologically, residues 1073–1128 (LYLKGRNKNIGRGNPATTSAIWKPKKEFDELKEPVLSFSAMTAGGAGPEDGMGEDI) are cytoplasmic.

From the mid-gastrula stage, expressed only in mesenchyme cells that are migrating toward the body wall. At the brachiolaria stage, expressed in presumptive coelomocytes of the coelomic pouch. Also expressed in adult coelomocytes (at protein level).

Its subcellular location is the cytoplasmic vesicle membrane. Its function is as follows. Involved in aggregate formation and phagocytosis by larval mesenchyme cells and adult coelomocytes. Binds to bacteria and may act as an opsonin in the innate immune system. This Patiria pectinifera (Starfish) protein is Scavenger receptor cysteine-rich domain superfamily protein.